We begin with the raw amino-acid sequence, 279 residues long: Large ribosomal subunit protein uL2 (279 aa).

Positions valine 223–arginine 279 are disordered. Positions valine 270 to arginine 279 are enriched in basic residues.

The protein belongs to the universal ribosomal protein uL2 family. Part of the 50S ribosomal subunit. Forms a bridge to the 30S subunit in the 70S ribosome.

Its function is as follows. One of the primary rRNA binding proteins. Required for association of the 30S and 50S subunits to form the 70S ribosome, for tRNA binding and peptide bond formation. It has been suggested to have peptidyltransferase activity; this is somewhat controversial. Makes several contacts with the 16S rRNA in the 70S ribosome. This chain is Large ribosomal subunit protein uL2, found in Leptospira borgpetersenii serovar Hardjo-bovis (strain JB197).